The following is a 528-amino-acid chain: UDP-glucuronosyltransferase 2B19 (528 aa).

A signal peptide spans 1-21 (MSMKWTSALLLIQLSCYLSFG). K135 is subject to N6-succinyllysine. N-linked (GlcNAc...) asparagine glycosylation is present at N315. A helical transmembrane segment spans residues 493–513 (VIGFLLACVATVIFIITKCLF).

The protein belongs to the UDP-glycosyltransferase family. Expressed in liver, ovary, prostate, colon, kidney, pancreas, brain, cerebellum, mammary gland and epididymis. Not expressed in small intestine, spleen, bladder, adrenal gland and testis.

The protein localises to the microsome membrane. The protein resides in the endoplasmic reticulum membrane. The catalysed reaction is glucuronate acceptor + UDP-alpha-D-glucuronate = acceptor beta-D-glucuronoside + UDP + H(+). In terms of biological role, UDPGT is of major importance in the conjugation and subsequent elimination of potentially toxic xenobiotics and endogenous compounds. This isozyme displays activity toward several classes of xenobiotic substrates: eugenol, 4-methyllumbelliferone, p-nitrophenol, 1-naphthol, p,p'-biphenol, naringenin and o,o'-biphenol. Active also on 3a-hydroxy and 17b-hydroxy positions of steroids. Functionally, contributes to the formation of androgen glucuronide in extrahepatic steroid target tissues such as the prostate. This Macaca fascicularis (Crab-eating macaque) protein is UDP-glucuronosyltransferase 2B19 (UGT2B19).